The sequence spans 226 residues: 2-C-methyl-D-erythritol 4-phosphate cytidylyltransferase (226 aa).

The protein belongs to the IspD/TarI cytidylyltransferase family. IspD subfamily.

It carries out the reaction 2-C-methyl-D-erythritol 4-phosphate + CTP + H(+) = 4-CDP-2-C-methyl-D-erythritol + diphosphate. Its pathway is isoprenoid biosynthesis; isopentenyl diphosphate biosynthesis via DXP pathway; isopentenyl diphosphate from 1-deoxy-D-xylulose 5-phosphate: step 2/6. Its function is as follows. Catalyzes the formation of 4-diphosphocytidyl-2-C-methyl-D-erythritol from CTP and 2-C-methyl-D-erythritol 4-phosphate (MEP). This chain is 2-C-methyl-D-erythritol 4-phosphate cytidylyltransferase, found in Prochlorococcus marinus (strain SARG / CCMP1375 / SS120).